The primary structure comprises 157 residues: Transcription elongation factor GreA (157 aa).

The protein belongs to the GreA/GreB family.

In terms of biological role, necessary for efficient RNA polymerase transcription elongation past template-encoded arresting sites. The arresting sites in DNA have the property of trapping a certain fraction of elongating RNA polymerases that pass through, resulting in locked ternary complexes. Cleavage of the nascent transcript by cleavage factors such as GreA or GreB allows the resumption of elongation from the new 3'terminus. GreA releases sequences of 2 to 3 nucleotides. This chain is Transcription elongation factor GreA, found in Caulobacter vibrioides (strain ATCC 19089 / CIP 103742 / CB 15) (Caulobacter crescentus).